Consider the following 161-residue polypeptide: Protein YzcX (161 aa).

The protein is Protein YzcX (yzcX) of Escherichia coli (strain K12).